We begin with the raw amino-acid sequence, 406 residues long: Multifunctional CCA protein (406 aa).

Positions 8 and 11 each coordinate ATP. Residues glycine 8 and arginine 11 each coordinate CTP. Mg(2+) is bound by residues aspartate 21 and aspartate 23. Residues arginine 91, arginine 137, and arginine 140 each contribute to the ATP site. The CTP site is built by arginine 91, arginine 137, and arginine 140. Positions 228 to 329 constitute an HD domain; that stretch reads TGIHTLMVAE…IKILNKFDVW (102 aa).

It belongs to the tRNA nucleotidyltransferase/poly(A) polymerase family. Bacterial CCA-adding enzyme type 1 subfamily. As to quaternary structure, monomer. Can also form homodimers and oligomers. The cofactor is Mg(2+). Ni(2+) is required as a cofactor.

The catalysed reaction is a tRNA precursor + 2 CTP + ATP = a tRNA with a 3' CCA end + 3 diphosphate. It carries out the reaction a tRNA with a 3' CCA end + 2 CTP + ATP = a tRNA with a 3' CCACCA end + 3 diphosphate. In terms of biological role, catalyzes the addition and repair of the essential 3'-terminal CCA sequence in tRNAs without using a nucleic acid template. Adds these three nucleotides in the order of C, C, and A to the tRNA nucleotide-73, using CTP and ATP as substrates and producing inorganic pyrophosphate. tRNA 3'-terminal CCA addition is required both for tRNA processing and repair. Also involved in tRNA surveillance by mediating tandem CCA addition to generate a CCACCA at the 3' terminus of unstable tRNAs. While stable tRNAs receive only 3'-terminal CCA, unstable tRNAs are marked with CCACCA and rapidly degraded. The chain is Multifunctional CCA protein from Vibrio parahaemolyticus serotype O3:K6 (strain RIMD 2210633).